The primary structure comprises 798 residues: Integrin beta-1-B (798 aa).

A signal peptide spans 1 to 21 (MARYPVFTFVFLICLVLCTNA). Over 22-727 (QQGGTECLKA…VKEPECPSGP (706 aa)) the chain is Extracellular. One can recognise a PSI domain in the interval 27 to 77 (ECLKANAKSCGECIQAGPNCGWCTKVDFLQEGEPTSARCDDLAALKTKGCP). 28 cysteine pairs are disulfide-bonded: Cys-28–Cys-46, Cys-36–Cys-464, Cys-39–Cys-65, Cys-49–Cys-76, Cys-206–Cys-212, Cys-260–Cys-300, Cys-400–Cys-414, Cys-434–Cys-462, Cys-466–Cys-486, Cys-477–Cys-489, Cys-491–Cys-500, Cys-502–Cys-533, Cys-516–Cys-531, Cys-525–Cys-536, Cys-538–Cys-553, Cys-555–Cys-576, Cys-560–Cys-574, Cys-568–Cys-579, Cys-581–Cys-590, Cys-592–Cys-615, Cys-599–Cys-613, Cys-607–Cys-618, Cys-620–Cys-630, Cys-633–Cys-636, Cys-640–Cys-691, Cys-646–Cys-665, Cys-649–Cys-661, and Cys-699–Cys-723. A disordered region spans residues 77 to 106 (PEDDIQNPRGRKQKLKDIPITSKGKGERMD). 2 N-linked (GlcNAc...) asparagine glycosylation sites follow: Asn-109 and Asn-131. In terms of domain architecture, VWFA spans 139–377 (DYPIDLYYLM…QLIIDSYNSL (239 aa)). Mg(2+) is bound by residues Ser-151 and Ser-153. 4 residues coordinate Ca(2+): Ser-153, Asp-156, Asp-157, and Glu-188. Asn-211 and Asn-223 each carry an N-linked (GlcNAc...) asparagine glycan. Asn-243, Asp-245, Pro-247, and Glu-248 together coordinate Ca(2+). Glu-248 contacts Mg(2+). N-linked (GlcNAc...) asparagine glycans are attached at residues Asn-268 and Asn-362. Residue Asn-416 is glycosylated (N-linked (GlcNAc...) asparagine). 4 I-EGF domains span residues 466–501 (CQDK…KECE), 502–554 (CSTD…KYCE), 555–591 (CDNF…SACD), and 592–631 (CSED…PTCE). N-linked (GlcNAc...) asparagine glycosylation is present at Asn-481. An N-linked (GlcNAc...) asparagine glycan is attached at Asn-520. The N-linked (GlcNAc...) asparagine glycan is linked to Asn-584. Asn-669 carries an N-linked (GlcNAc...) asparagine glycan. A helical transmembrane segment spans residues 728 to 751 (DIIPIVAGVVAGIVLIGLALLLIW). Over 752–798 (KLLMIIHDRREFAKFEKEKMNAKWDTGENPIYKSAVATVVNPKYEGK) the chain is Cytoplasmic. Tyr-783 is subject to Phosphotyrosine.

Belongs to the integrin beta chain family. As to quaternary structure, heterodimer of an alpha and a beta subunit.

The protein resides in the cell membrane. It is found in the cell projection. It localises to the invadopodium membrane. Its subcellular location is the ruffle membrane. The protein localises to the melanosome. The protein resides in the cleavage furrow. It is found in the lamellipodium. It localises to the ruffle. Its function is as follows. Beta integrins associate with alpha subunits to form receptor complexes that recognize the sequence R-G-D in a wide array of ligands. May be involved in osteoblast compaction. May play role in myoblast differentiation and fusion during skeletal myogenesis. This chain is Integrin beta-1-B (itgb1-b), found in Xenopus laevis (African clawed frog).